We begin with the raw amino-acid sequence, 339 residues long: Dipeptide transport system permease protein DppB (339 aa).

Topologically, residues 1–9 (MLQFILRRL) are periplasmic. Residues 10 to 30 (GLVIPTFIGITLLTFAFVHMI) form a helical membrane-spanning segment. Over 31–102 (PGDPVMIMAG…VPRFQATLEL (72 aa)) the chain is Cytoplasmic. Positions 96 to 328 (FQATLELGVC…LVNLLVDLLY (233 aa)) constitute an ABC transmembrane type-1 domain. The helical transmembrane segment at 103 to 123 (GVCAMIFATAVGIPVGVLAAV) threads the bilayer. Residues 124-135 (KRGSIFDHTAVG) are Periplasmic-facing. Residues 136–156 (LALTGYSMPIFWWGMMLIMLV) traverse the membrane as a helical segment. At 157–171 (SVHWNLTPVSGRVSD) the chain is on the cytoplasmic side. A helical transmembrane segment spans residues 172-192 (MVFLDDSNPLTGFMLIDTAIW). The Periplasmic portion of the chain corresponds to 193–200 (GEDGNFID). A helical transmembrane segment spans residues 201-221 (AVAHMILPAIVLGTIPLAVIV). Residues 222–259 (RMTRSSMLEVLGEDYIRTARAKGLTRMRVIIVHALRNA) are Cytoplasmic-facing. Residues 260–280 (MLPVVTVIGLQVGTLLAGAIL) form a helical membrane-spanning segment. Topologically, residues 281–309 (TETIFSWPGLGRWLIDALQRRDYPVVQGG) are periplasmic. A helical membrane pass occupies residues 310-330 (VLLVATMIILVNLLVDLLYGV). Over 331–339 (VNPRIRHKK) the chain is Cytoplasmic.

Belongs to the binding-protein-dependent transport system permease family. OppBC subfamily. As to quaternary structure, the complex is composed of two ATP-binding proteins (DppD and DppF), two transmembrane proteins (DppB and DppC) and a solute-binding protein (DppA).

The protein resides in the cell inner membrane. Functionally, part of the ABC transporter DppABCDF involved in dipeptide transport. Responsible for the translocation of the substrate across the membrane. This chain is Dipeptide transport system permease protein DppB (dppB), found in Escherichia coli O157:H7.